A 21-amino-acid chain; its full sequence is Fibrinogen beta chain (21 aa).

Glutamine 1 carries the post-translational modification Pyrrolidone carboxylic acid. Acidic residues predominate over residues 1-10 (QFPTDYDEGQ). The segment at 1-21 (QFPTDYDEGQDDRPKLGLGAR) is disordered. Residue threonine 4 is glycosylated (O-linked (GalNAc...) threonine). Position 6 is a sulfotyrosine (tyrosine 6).

In terms of assembly, heterohexamer; disulfide linked. Contains 2 sets of 3 non-identical chains (alpha, beta and gamma). The 2 heterotrimers are in head to head conformation with the N-termini in a small central domain. Conversion of fibrinogen to fibrin is triggered by thrombin, which cleaves fibrinopeptides A and B from alpha and beta chains, and thus exposes the N-terminal polymerization sites responsible for the formation of the soft clot.

The protein localises to the secreted. In terms of biological role, cleaved by the protease thrombin to yield monomers which, together with fibrinogen alpha (FGA) and fibrinogen gamma (FGG), polymerize to form an insoluble fibrin matrix. Fibrin has a major function in hemostasis as one of the primary components of blood clots. In addition, functions during the early stages of wound repair to stabilize the lesion and guide cell migration during re-epithelialization. Was originally thought to be essential for platelet aggregation, based on in vitro studies using anticoagulated blood. However subsequent studies have shown that it is not absolutely required for thrombus formation in vivo. Enhances expression of SELP in activated platelets. Maternal fibrinogen is essential for successful pregnancy. Fibrin deposition is also associated with infection, where it protects against IFNG-mediated hemorrhage. May also facilitate the antibacterial immune response via both innate and T-cell mediated pathways. The polypeptide is Fibrinogen beta chain (FGB) (Bubalus bubalis (Domestic water buffalo)).